The following is a 186-amino-acid chain: Large ribosomal subunit protein bL12c (186 aa).

Residues 1–11 show a composition bias toward polar residues; that stretch reads MASTLSTITLR. Positions 1–24 are disordered; the sequence is MASTLSTITLRSPSPSTATSTHAS. A chloroplast-targeting transit peptide spans 1-53; the sequence is MASTLSTITLRSPSPSTATSTHASIPFPKKTLEFPIRTPKLQNRRATFLRPLA. Residues 12-24 are compositionally biased toward low complexity; it reads SPSPSTATSTHAS.

It belongs to the bacterial ribosomal protein bL12 family.

Its subcellular location is the plastid. The protein localises to the chloroplast. This is Large ribosomal subunit protein bL12c from Nicotiana sylvestris (Wood tobacco).